The chain runs to 502 residues: MKKLKILMAASECVPFAKEGGLADVVGVLPKHLARMGHDVRVVMPRYKRVDRERYGLKQLPGVLVVPMGVIGNQYCGVWEGRIPGSDVPVYFLEHEGYYDRDGLYEVNNEGFLDNDNRFVFLSKAALELPKMIGFEPDLLHAHDWHTAAIPVLVNTTYAADPYVGGKATVLSVHNMQHQGNFYEGLMDVLGIGWEHFTFLGLENNGEANLLKGGLYHATVLNTVSEGYAREMQTPEYGWGLDGVVRERAADLYGILNGVDYEDWNPEVDPYIAARYSAADLSGKKLCKRDLQRTFGLPERDDVPLFGMVSRLVKQKGVDILAEAIHRILALDVQFVMLGAGEPWTHFYFGDIKNAYPDKFNIFVGYNNPLSHQIEAGADFFLMPSAFEPCGLNQMYSLRYGTLPIVRATGGLDDSVENFDEKTLVGTGFKFWSRDAGALFDTVGWAVHTWYHRKDAMERLIANAMAKRFTWEDAAARYEDLYGRALRKRLGEKEFARRYGKG.

ADP-alpha-D-glucose is bound at residue Lys-18.

This sequence belongs to the glycosyltransferase 1 family. Bacterial/plant glycogen synthase subfamily.

It catalyses the reaction [(1-&gt;4)-alpha-D-glucosyl](n) + ADP-alpha-D-glucose = [(1-&gt;4)-alpha-D-glucosyl](n+1) + ADP + H(+). The protein operates within glycan biosynthesis; glycogen biosynthesis. Functionally, synthesizes alpha-1,4-glucan chains using ADP-glucose. The protein is Glycogen synthase 1 of Geobacter metallireducens (strain ATCC 53774 / DSM 7210 / GS-15).